Reading from the N-terminus, the 514-residue chain is Alpha-1,3/1,6-mannosyltransferase ALG2 (514 aa).

N-linked (GlcNAc...) asparagine glycosylation is present at N94. 2 helical membrane passes run 443-463 and 468-490; these read WAVMVILAASYILWRSSHVFG and YIYLLTGGILVLRSRYLLAIFWV.

It belongs to the glycosyltransferase group 1 family.

Its subcellular location is the endoplasmic reticulum membrane. The catalysed reaction is a beta-D-Man-(1-&gt;4)-beta-D-GlcNAc-(1-&gt;4)-alpha-D-GlcNAc-diphospho-di-trans,poly-cis-dolichol + GDP-alpha-D-mannose = an alpha-D-Man-(1-&gt;3)-beta-D-Man-(1-&gt;4)-beta-D-GlcNAc-(1-&gt;4)-alpha-D-GlcNAc-diphospho-di-trans,poly-cis-dolichol + GDP + H(+). It catalyses the reaction an alpha-D-Man-(1-&gt;3)-beta-D-Man-(1-&gt;4)-beta-D-GlcNAc-(1-&gt;4)-alpha-D-GlcNAc-diphospho-di-trans,poly-cis-dolichol + GDP-alpha-D-mannose = an alpha-D-Man-(1-&gt;3)-[alpha-D-Man-(1-&gt;6)]-beta-D-Man-(1-&gt;4)-beta-D-GlcNAc-(1-&gt;4)-alpha-D-GlcNAc-diphospho-di-trans,poly-cis-dolichol + GDP + H(+). Its pathway is protein modification; protein glycosylation. In terms of biological role, mannosylates Man(2)GlcNAc(2)-dolichol diphosphate and Man(1)GlcNAc(2)-dolichol diphosphate to form Man(3)GlcNAc(2)-dolichol diphosphate. This is Alpha-1,3/1,6-mannosyltransferase ALG2 (ALG2) from Eremothecium gossypii (strain ATCC 10895 / CBS 109.51 / FGSC 9923 / NRRL Y-1056) (Yeast).